A 312-amino-acid polypeptide reads, in one-letter code: Lipoyl synthase (312 aa).

[4Fe-4S] cluster is bound by residues C37, C42, C48, C67, C71, C74, and S281. One can recognise a Radical SAM core domain in the interval 52 to 270 (RDGPGTATFM…AVAEREFDFL (219 aa)).

It belongs to the radical SAM superfamily. Lipoyl synthase family. The cofactor is [4Fe-4S] cluster.

The protein localises to the cytoplasm. It carries out the reaction [[Fe-S] cluster scaffold protein carrying a second [4Fe-4S](2+) cluster] + N(6)-octanoyl-L-lysyl-[protein] + 2 oxidized [2Fe-2S]-[ferredoxin] + 2 S-adenosyl-L-methionine + 4 H(+) = [[Fe-S] cluster scaffold protein] + N(6)-[(R)-dihydrolipoyl]-L-lysyl-[protein] + 4 Fe(3+) + 2 hydrogen sulfide + 2 5'-deoxyadenosine + 2 L-methionine + 2 reduced [2Fe-2S]-[ferredoxin]. It functions in the pathway protein modification; protein lipoylation via endogenous pathway; protein N(6)-(lipoyl)lysine from octanoyl-[acyl-carrier-protein]: step 2/2. Functionally, catalyzes the radical-mediated insertion of two sulfur atoms into the C-6 and C-8 positions of the octanoyl moiety bound to the lipoyl domains of lipoate-dependent enzymes, thereby converting the octanoylated domains into lipoylated derivatives. The chain is Lipoyl synthase from Halorubrum lacusprofundi (strain ATCC 49239 / DSM 5036 / JCM 8891 / ACAM 34).